The following is a 437-amino-acid chain: tRNA(Ile)-lysidine synthase (437 aa).

ATP is bound at residue 22–27; that stretch reads SGGLDS.

This sequence belongs to the tRNA(Ile)-lysidine synthase family.

It is found in the cytoplasm. The catalysed reaction is cytidine(34) in tRNA(Ile2) + L-lysine + ATP = lysidine(34) in tRNA(Ile2) + AMP + diphosphate + H(+). In terms of biological role, ligates lysine onto the cytidine present at position 34 of the AUA codon-specific tRNA(Ile) that contains the anticodon CAU, in an ATP-dependent manner. Cytidine is converted to lysidine, thus changing the amino acid specificity of the tRNA from methionine to isoleucine. The chain is tRNA(Ile)-lysidine synthase from Xylella fastidiosa (strain 9a5c).